Here is an 896-residue protein sequence, read N- to C-terminus: MTDVTIKALASEIQTSVDRLIQQFADAGIRKSADDSVTSQEKQTLLTHLNREHGSAPDKLTLQRKTRSTLNIPGTGGKSKSVQIEVRKKRTFVKRDPQEAERLAAEEQAQREAEEQARREAEEAAKREAQLKAEREAAEQAKREVADKAKREAAEKDKVSNQHTDEMTKTAQAEKIRRENEAAELKRKSEEEARRKLEEEARRVAEEARRMAEENEKNWSETSDSPEDSSDYHVTTSQHARQAEDDNDREVEGGRGRSRSSKAARPAKKGNKHAESKADREEARAAVRGGKGGKHRKGSALQQGFQKPAQAVNRDVVIGETITVGELANKMAVKGSQVIKAMMKLGAMATINQVIDQETAQLVAEEMGHKVILRRENELEEAVMSDRDTGAAAEPRAPVVTIMGHVDHGKTSLLDYIRSTKVASGEAGGITQHIGAYHVETDNGMITFLDTPGHAAFTSMRARGAQATDIVVLVVAADDGVMPQTIEAIQHAKAAQVPVVVAVNKIDKPEADPDRVKNELSQYGILPEEWGGESQFVHVSAKAGTGIDDLLDAILLQAEVLELKAVRNGMASGAVIESFLDKGRGPVATVLVREGTLHKGDIVLCGFEYGRVRAMRDELGREVLEAGPSIPVEILGLSGVPAAGDEVTVVRDEKKAREVALYRQGKFREVKLARQQKSKLENMFANMTEGEVHEVNIVLKADVQGSVEAISDSLLKLSTDEVKVKIIGSGVGGITETDATLAAASNAILVGFNVRADASARKVIEAESLDLRYYSVIYNLIDEVKAAMSGMLSPELKQQIIGLAEVRDVFKSPKFGAIAGCMVTEGTIKRHNPIRVLRDNVVIYEGELESLRRFKDDVNEVRNGMECGIGVKNYNDVRVGDMIEVFEIIEIQRSID.

Residues 93 to 219 (VKRDPQEAER…RMAEENEKNW (127 aa)) are compositionally biased toward basic and acidic residues. The tract at residues 93–307 (VKRDPQEAER…GSALQQGFQK (215 aa)) is disordered. Over residues 256–271 (GRSRSSKAARPAKKGN) the composition is skewed to basic residues. The span at 272-285 (KHAESKADREEARA) shows a compositional bias: basic and acidic residues. The tr-type G domain occupies 395–564 (PRAPVVTIMG…LLQAEVLELK (170 aa)). Positions 404-411 (GHVDHGKT) are G1. 404-411 (GHVDHGKT) lines the GTP pocket. The G2 stretch occupies residues 429 to 433 (GITQH). Positions 450 to 453 (DTPG) are G3. GTP contacts are provided by residues 450-454 (DTPGH) and 504-507 (NKID). Positions 504–507 (NKID) are G4. Residues 540–542 (SAK) form a G5 region.

This sequence belongs to the TRAFAC class translation factor GTPase superfamily. Classic translation factor GTPase family. IF-2 subfamily.

It localises to the cytoplasm. Functionally, one of the essential components for the initiation of protein synthesis. Protects formylmethionyl-tRNA from spontaneous hydrolysis and promotes its binding to the 30S ribosomal subunits. Also involved in the hydrolysis of GTP during the formation of the 70S ribosomal complex. This chain is Translation initiation factor IF-2, found in Klebsiella pneumoniae subsp. pneumoniae (strain ATCC 700721 / MGH 78578).